A 347-amino-acid chain; its full sequence is Neutral protease 2 homolog MGG_10927 (347 aa).

Residues 1–19 (MKYSVGITALLATLAQGAA) form the signal peptide. A propeptide spanning residues 20 to 176 (VMSKRDIPLD…RSYLAKRTMV (157 aa)) is cleaved from the precursor. 2 disulfide bridges follow: Cys180/Cys250 and Cys257/Cys275. His299 contributes to the Zn(2+) binding site. Glu300 is an active-site residue. His303 contacts Zn(2+).

It belongs to the peptidase M35 family. It depends on Zn(2+) as a cofactor.

The protein localises to the secreted. It catalyses the reaction Preferential cleavage of bonds with hydrophobic residues in P1'. Also 3-Asn-|-Gln-4 and 8-Gly-|-Ser-9 bonds in insulin B chain.. In terms of biological role, secreted metalloproteinase that allows assimilation of proteinaceous substrates. Shows high activities on basic nuclear substrates such as histone and protamine. The sequence is that of Neutral protease 2 homolog MGG_10927 from Pyricularia oryzae (strain 70-15 / ATCC MYA-4617 / FGSC 8958) (Rice blast fungus).